We begin with the raw amino-acid sequence, 392 residues long: MRKKLTALVLSALPLAAVADVSLYGEIKAGVEGRNYQLQLTEAQAANGGASGQVKVTKVTKAKSRIRTKISDFGSFIGFKGSEDLGDGLKAVWQLEQDVSVAGGGATQWGNRESFIGLAGEFGTLRAGRVANQFDDASQAIDPWDSNNDVASQLGIFKRHDDMPVSVRYDSPEFSGFSGSVQFVPIQNSKSAYTPAYYTKDTNNNLTLVPAVVGKPGSDVYYAGLNYKNGGFAGNYAFKYARHANVGRNAFELFLIGSGSDQAKGTDPLKNHQVHRLTGGYEEGGLNLALAAQLDLSENGDKTKNSTTEIAATASYRFGNAVPRISYAHGFDFIERGKKGENTSYDQIIAGVDYDFSKRTSAIVSGAWLKRNTGIGNYTQINAASVGLRHKF.

Residues Met1–Ala19 form the signal peptide.

The protein belongs to the Gram-negative porin family. As to quaternary structure, homotrimer.

Its subcellular location is the cell outer membrane. In terms of biological role, serves as a slightly cation selective porin. Major antigen on the gonococcal cell surface and it may have pathogenic properties in addition to its porin activity. The chain is Major outer membrane protein P.IA (porA) from Neisseria meningitidis serogroup B / serotype 15 (strain H44/76).